The primary structure comprises 181 residues: MRYVLLGPPGAGKGTQAALLSEKLGVPHISTGDLFRANIGEGTPLGLEAKSYIDAGKLVPTDVTARMVEDRLNQDDAKDGFLLDGFPRTVQQADILEKLLSDKDLKLDGVLNFEVSEDVVVERMLARGRADDTEETIRTRLGVYREETFPLIEHYGDAIISIKAEGTVEEINERTLQAMGK.

Residue 10 to 15 (GAGKGT) coordinates ATP. The interval 30–59 (STGDLFRANIGEGTPLGLEAKSYIDAGKLV) is NMP. AMP is bound by residues Thr31, Arg36, 57–59 (KLV), 85–88 (GFPR), and Gln92. The interval 126–132 (ARGRADD) is LID. An ATP-binding site is contributed by Arg127. AMP-binding residues include Arg129 and Arg140. Gly166 is an ATP binding site.

This sequence belongs to the adenylate kinase family. In terms of assembly, monomer.

Its subcellular location is the cytoplasm. The enzyme catalyses AMP + ATP = 2 ADP. Its pathway is purine metabolism; AMP biosynthesis via salvage pathway; AMP from ADP: step 1/1. Catalyzes the reversible transfer of the terminal phosphate group between ATP and AMP. Plays an important role in cellular energy homeostasis and in adenine nucleotide metabolism. This chain is Adenylate kinase, found in Corynebacterium aurimucosum (strain ATCC 700975 / DSM 44827 / CIP 107346 / CN-1) (Corynebacterium nigricans).